A 142-amino-acid polypeptide reads, in one-letter code: MNITDIKKYIPHRYPFLLIDRVIKIEKDKSLVAIKNVTVNEPFFTGHFPVRPVMPGVLIIESLAQAAGILIVKSLNLPEGHKDIYFFAGVDNARFKRVVEPGDQLTLEVKVLKVHRGLWKFEGKATVDDQLACKAELMTIKG.

Histidine 47 is an active-site residue.

It belongs to the thioester dehydratase family. FabZ subfamily.

The protein localises to the cytoplasm. The enzyme catalyses a (3R)-hydroxyacyl-[ACP] = a (2E)-enoyl-[ACP] + H2O. Involved in unsaturated fatty acids biosynthesis. Catalyzes the dehydration of short chain beta-hydroxyacyl-ACPs and long chain saturated and unsaturated beta-hydroxyacyl-ACPs. This Coxiella burnetii (strain RSA 331 / Henzerling II) protein is 3-hydroxyacyl-[acyl-carrier-protein] dehydratase FabZ.